The following is a 131-amino-acid chain: ATP synthase epsilon chain (131 aa).

The protein belongs to the ATPase epsilon chain family. As to quaternary structure, F-type ATPases have 2 components, CF(1) - the catalytic core - and CF(0) - the membrane proton channel. CF(1) has five subunits: alpha(3), beta(3), gamma(1), delta(1), epsilon(1). CF(0) has three main subunits: a, b and c.

It localises to the cell membrane. Its function is as follows. Produces ATP from ADP in the presence of a proton gradient across the membrane. This is ATP synthase epsilon chain from Bacillus pumilus (strain SAFR-032).